The primary structure comprises 306 residues: tRNA dimethylallyltransferase 2 (306 aa).

Glycine 19–threonine 26 serves as a coordination point for ATP. A substrate-binding site is contributed by threonine 21–threonine 26. The segment at aspartate 44–glutamine 47 is interaction with substrate tRNA.

This sequence belongs to the IPP transferase family. As to quaternary structure, monomer. The cofactor is Mg(2+).

The enzyme catalyses adenosine(37) in tRNA + dimethylallyl diphosphate = N(6)-dimethylallyladenosine(37) in tRNA + diphosphate. In terms of biological role, catalyzes the transfer of a dimethylallyl group onto the adenine at position 37 in tRNAs that read codons beginning with uridine, leading to the formation of N6-(dimethylallyl)adenosine (i(6)A). The sequence is that of tRNA dimethylallyltransferase 2 from Citrifermentans bemidjiense (strain ATCC BAA-1014 / DSM 16622 / JCM 12645 / Bem) (Geobacter bemidjiensis).